The following is a 764-amino-acid chain: 5-methyltetrahydropteroyltriglutamate--homocysteine methyltransferase (764 aa).

5-methyltetrahydropteroyltri-L-glutamate-binding positions include 16-19 (RELK) and Lys115. Residues 435 to 437 (IGS) and Glu488 contribute to the L-homocysteine site. L-methionine contacts are provided by residues 435-437 (IGS) and Glu488. 5-methyltetrahydropteroyltri-L-glutamate contacts are provided by residues 519–520 (RC) and Trp565. An L-homocysteine-binding site is contributed by Asp603. Asp603 is an L-methionine binding site. Glu609 contributes to the 5-methyltetrahydropteroyltri-L-glutamate binding site. Zn(2+)-binding residues include His645, Cys647, and Glu669. His698 (proton donor) is an active-site residue. Residue Cys730 participates in Zn(2+) binding.

The protein belongs to the vitamin-B12 independent methionine synthase family. Zn(2+) is required as a cofactor.

It carries out the reaction 5-methyltetrahydropteroyltri-L-glutamate + L-homocysteine = tetrahydropteroyltri-L-glutamate + L-methionine. Its pathway is amino-acid biosynthesis; L-methionine biosynthesis via de novo pathway; L-methionine from L-homocysteine (MetE route): step 1/1. Functionally, catalyzes the transfer of a methyl group from 5-methyltetrahydrofolate to homocysteine resulting in methionine formation. The chain is 5-methyltetrahydropteroyltriglutamate--homocysteine methyltransferase from Burkholderia pseudomallei (strain K96243).